Consider the following 190-residue polypeptide: Cancer-related nucleoside-triphosphatase homolog (190 aa).

Residues 9–16 and 109–116 each bind ATP; these read GPPGVGKT and VCIIDEIG. Position 165 is an N6-acetyllysine (Lys-165).

The protein belongs to the THEP1 NTPase family. Monomer.

It catalyses the reaction a ribonucleoside 5'-triphosphate + H2O = a ribonucleoside 5'-diphosphate + phosphate + H(+). It carries out the reaction 5-methyl-UTP + H2O = 5-methyl-UDP + phosphate + H(+). The catalysed reaction is CTP + H2O = CDP + phosphate + H(+). The enzyme catalyses ATP + H2O = ADP + phosphate + H(+). It catalyses the reaction GTP + H2O = GDP + phosphate + H(+). In terms of biological role, has nucleotide phosphatase activity towards ATP, GTP, CTP, TTP and UTP. Hydrolyzes nucleoside diphosphates with lower efficiency. The chain is Cancer-related nucleoside-triphosphatase homolog from Mus musculus (Mouse).